We begin with the raw amino-acid sequence, 33 residues long: Potassium channel toxin alpha-KTx 10.4 (33 aa).

3 cysteine pairs are disulfide-bonded: cysteine 3/cysteine 22, cysteine 8/cysteine 27, and cysteine 12/cysteine 29.

The protein belongs to the short scorpion toxin superfamily. Potassium channel inhibitor family. Alpha-KTx 10 subfamily. In terms of tissue distribution, expressed by the venom gland.

It is found in the secreted. Functionally, blocks human voltage-gated potassium channel Kv1.2/KCNA2 (IC(50)=3.6 nM) and Kv1.3/KCNA3 (IC(50)=72 nM). The protein is Potassium channel toxin alpha-KTx 10.4 of Centruroides tecomanus (Scorpion).